Consider the following 293-residue polypeptide: Mating-type protein A-1 (293 aa).

The alpha box DNA-binding region spans Ala-42–Arg-97.

It belongs to the MATALPHA1 family.

Its subcellular location is the nucleus. Mating type proteins are sequence specific DNA-binding proteins that act as master switches in yeast differentiation by controlling gene expression in a cell type-specific fashion. Transcriptional activator that induces the transcription of A-specific genes like mating factor ccg-4. Required for mating as an A-cell and for blocking of heterokaryon formation (vegetative incompatibility). This Neurospora crassa (strain ATCC 24698 / 74-OR23-1A / CBS 708.71 / DSM 1257 / FGSC 987) protein is Mating-type protein A-1 (mtA-1).